We begin with the raw amino-acid sequence, 210 residues long: Probable nicotinate-nucleotide adenylyltransferase (210 aa).

Belongs to the NadD family.

The enzyme catalyses nicotinate beta-D-ribonucleotide + ATP + H(+) = deamido-NAD(+) + diphosphate. Its pathway is cofactor biosynthesis; NAD(+) biosynthesis; deamido-NAD(+) from nicotinate D-ribonucleotide: step 1/1. In terms of biological role, catalyzes the reversible adenylation of nicotinate mononucleotide (NaMN) to nicotinic acid adenine dinucleotide (NaAD). This Streptococcus pyogenes serotype M3 (strain ATCC BAA-595 / MGAS315) protein is Probable nicotinate-nucleotide adenylyltransferase.